Consider the following 327-residue polypeptide: Probable cell division protein WhiA (327 aa).

A DNA-binding region (H-T-H motif) is located at residues 275–308 (SLEELGQLADPPMTKDAVAGRIRRLLSMADRKAK). Residues 306–327 (KAKETGIPDTESAVTADLLDDA) are disordered.

This sequence belongs to the WhiA family.

In terms of biological role, involved in cell division and chromosome segregation. The protein is Probable cell division protein WhiA of Rhodococcus jostii (strain RHA1).